A 235-amino-acid polypeptide reads, in one-letter code: Dephospho-CoA kinase (235 aa).

Residues 15 to 219 (NVGLTGSISC…KKERLQRKSA (205 aa)) form the DPCK domain. 23 to 28 (SCGKST) provides a ligand contact to ATP.

This sequence belongs to the CoaE family.

It is found in the cytoplasm. It catalyses the reaction 3'-dephospho-CoA + ATP = ADP + CoA + H(+). It functions in the pathway cofactor biosynthesis; coenzyme A biosynthesis; CoA from (R)-pantothenate: step 5/5. Its function is as follows. Catalyzes the phosphorylation of the 3'-hydroxyl group of dephosphocoenzyme A to form coenzyme A. The polypeptide is Dephospho-CoA kinase (Syntrophus aciditrophicus (strain SB)).